The sequence spans 641 residues: YAP1-binding protein 2 (641 aa).

Belongs to the YBP1 family.

The protein resides in the cytoplasm. In terms of biological role, involved in oxidative stress response and redox homeostasis. Required for hydrogen peroxide-induced activation of YAP1. Acts in a parallele pathway to YBP1. The sequence is that of YAP1-binding protein 2 from Saccharomyces cerevisiae (strain ATCC 204508 / S288c) (Baker's yeast).